We begin with the raw amino-acid sequence, 395 residues long: MRTLGGFTFPCDAPVFVRVDFNVPMDEVGTITDDLRIRASLPTIESLLGRGAPLILISHLGRPVKNEQQGFSLKPCAERLSEYIGVNVPLVDFLDLDTKLYGELTRHLDKSGIVLFENIRFFAEETSKAQADRRILAEQLAPFAGAYVNDAFGASHRRHASVYELAQAFSNKAAGFLIESEMQAFSHLASEAKRPYTVILGGAKLSDKLRLIENILPTVDRLLLCGGMAFTFLAAQGCETGKSLLEESFIPEANKIIDFAKQNNVELILPVDVIEARSLTSPLGVVSKAESISYMGLDIGPETQSIFRNVIQDSKTVFWNGPAGLFENPSFSNGTRALLDALSSSSAFTFIGGGDTAAAVSLLGFDYGDFSHVSTGGGACLELLEGKILPALEVL.

Residues 20 to 22, arginine 36, 59 to 62, arginine 120, and arginine 157 each bind substrate; these read DFN and HLGR. Residues lysine 208, glycine 296, glutamate 327, and 353 to 356 contribute to the ATP site; that span reads GGDT.

Belongs to the phosphoglycerate kinase family. In terms of assembly, monomer.

The protein resides in the cytoplasm. The enzyme catalyses (2R)-3-phosphoglycerate + ATP = (2R)-3-phospho-glyceroyl phosphate + ADP. The protein operates within carbohydrate degradation; glycolysis; pyruvate from D-glyceraldehyde 3-phosphate: step 2/5. The protein is Phosphoglycerate kinase of Tropheryma whipplei (strain Twist) (Whipple's bacillus).